Consider the following 352-residue polypeptide: Protein-glutamate methylesterase/protein-glutamine glutaminase 2 (352 aa).

The region spanning M1–E116 is the Response regulatory domain. D50 is modified (4-aspartylphosphate). A CheB-type methylesterase domain is found at A162–Q352. Active-site residues include S174, H200, and D296.

It belongs to the CheB family. Phosphorylated by CheA. Phosphorylation of the N-terminal regulatory domain activates the methylesterase activity.

The protein resides in the cytoplasm. The enzyme catalyses [protein]-L-glutamate 5-O-methyl ester + H2O = L-glutamyl-[protein] + methanol + H(+). It catalyses the reaction L-glutaminyl-[protein] + H2O = L-glutamyl-[protein] + NH4(+). In terms of biological role, involved in chemotaxis. Part of a chemotaxis signal transduction system that modulates chemotaxis in response to various stimuli. Catalyzes the demethylation of specific methylglutamate residues introduced into the chemoreceptors (methyl-accepting chemotaxis proteins or MCP) by CheR. Also mediates the irreversible deamidation of specific glutamine residues to glutamic acid. This chain is Protein-glutamate methylesterase/protein-glutamine glutaminase 2, found in Xanthomonas axonopodis pv. citri (strain 306).